Consider the following 263-residue polypeptide: Putative hydro-lyase GK2103 (263 aa).

Belongs to the D-glutamate cyclase family.

This is Putative hydro-lyase GK2103 from Geobacillus kaustophilus (strain HTA426).